Here is a 129-residue protein sequence, read N- to C-terminus: Small ribosomal subunit protein uS11 (129 aa).

The disordered stretch occupies residues 107–129 (IEDVTPVPHDSIRGKGGRRGRRV).

It belongs to the universal ribosomal protein uS11 family. In terms of assembly, part of the 30S ribosomal subunit.

In terms of biological role, located on the platform of the 30S subunit. The sequence is that of Small ribosomal subunit protein uS11 from Methanoculleus marisnigri (strain ATCC 35101 / DSM 1498 / JR1).